Consider the following 499-residue polypeptide: Maturase K (499 aa).

Belongs to the intron maturase 2 family. MatK subfamily.

Its subcellular location is the plastid. It localises to the chloroplast. In terms of biological role, usually encoded in the trnK tRNA gene intron. Probably assists in splicing its own and other chloroplast group II introns. The polypeptide is Maturase K (Macrozamia communis (Burrawang palm)).